A 117-amino-acid polypeptide reads, in one-letter code: Immunoglobulin kappa variable 1-33 (117 aa).

The first 22 residues, 1–22 (MDMRVPAQLLGLLLLWLSGARC), serve as a signal peptide directing secretion. Positions 23 to 45 (DIQMTQSPSSLSASVGDRVTITC) are framework-1. Positions 24-117 (IQMTQSPSSL…YYCQQYDNLP (94 aa)) constitute an Ig-like domain. A disulfide bridge connects residues C45 and C110. Positions 46–56 (QASQDISNYLN) are complementarity-determining-1. Residues 57 to 71 (WYQQKPGKAPKLLIY) are framework-2. The tract at residues 72–78 (DASNLET) is complementarity-determining-2. Residues 79 to 110 (GVPSRFSGSGSGTDFTFTISSLQPEDIATYYC) are framework-3. The tract at residues 111-117 (QQYDNLP) is complementarity-determining-3.

As to quaternary structure, immunoglobulins are composed of two identical heavy chains and two identical light chains; disulfide-linked.

The protein resides in the secreted. The protein localises to the cell membrane. V region of the variable domain of immunoglobulin light chains that participates in the antigen recognition. Immunoglobulins, also known as antibodies, are membrane-bound or secreted glycoproteins produced by B lymphocytes. In the recognition phase of humoral immunity, the membrane-bound immunoglobulins serve as receptors which, upon binding of a specific antigen, trigger the clonal expansion and differentiation of B lymphocytes into immunoglobulins-secreting plasma cells. Secreted immunoglobulins mediate the effector phase of humoral immunity, which results in the elimination of bound antigens. The antigen binding site is formed by the variable domain of one heavy chain, together with that of its associated light chain. Thus, each immunoglobulin has two antigen binding sites with remarkable affinity for a particular antigen. The variable domains are assembled by a process called V-(D)-J rearrangement and can then be subjected to somatic hypermutations which, after exposure to antigen and selection, allow affinity maturation for a particular antigen. This is Immunoglobulin kappa variable 1-33 from Homo sapiens (Human).